The primary structure comprises 207 residues: Guanylate kinase (207 aa).

The Guanylate kinase-like domain maps to 6–185 (GLLIVLSGPS…AKNRIQCIVE (180 aa)). 13–20 (GPSGVGKG) lines the ATP pocket.

The protein belongs to the guanylate kinase family.

Its subcellular location is the cytoplasm. The catalysed reaction is GMP + ATP = GDP + ADP. In terms of biological role, essential for recycling GMP and indirectly, cGMP. The sequence is that of Guanylate kinase from Staphylococcus aureus (strain Mu50 / ATCC 700699).